We begin with the raw amino-acid sequence, 301 residues long: Homoserine O-acetyltransferase (301 aa).

Catalysis depends on C142, which acts as the Acyl-thioester intermediate. Substrate is bound by residues K163 and S192. H235 acts as the Proton acceptor in catalysis. E237 is a catalytic residue. R249 lines the substrate pocket.

This sequence belongs to the MetA family.

It localises to the cytoplasm. The catalysed reaction is L-homoserine + acetyl-CoA = O-acetyl-L-homoserine + CoA. Its pathway is amino-acid biosynthesis; L-methionine biosynthesis via de novo pathway; O-acetyl-L-homoserine from L-homoserine: step 1/1. Its function is as follows. Transfers an acetyl group from acetyl-CoA to L-homoserine, forming acetyl-L-homoserine. This is Homoserine O-acetyltransferase from Clostridium acetobutylicum (strain ATCC 824 / DSM 792 / JCM 1419 / IAM 19013 / LMG 5710 / NBRC 13948 / NRRL B-527 / VKM B-1787 / 2291 / W).